We begin with the raw amino-acid sequence, 167 residues long: Myelin basic protein (167 aa).

Position 1 is an N-acetylalanine (A1). Residues S7 and S12 each carry the phosphoserine modification. Y14 carries the phosphotyrosine modification. T17 carries the phosphothreonine modification. S19 is subject to Phosphoserine. The residue at position 20 (T20) is a Phosphothreonine. Residues R25 and R31 each carry the citrulline modification. T35 carries the phosphothreonine modification. S40 bears the Phosphoserine mark. Omega-N-methylarginine occurs at positions 43 and 49. Residues 45-87 (FGSDRAAPKRGSGKDSHHAARTTHYGSLPQKSQRSQDENPVVH) are induces experimental autoimmune encephalomyelitis (EAE) 1. Residues 46 to 114 (GSDRAAPKRG…GRGLSLSRFS (69 aa)) are disordered. Position 56 is a phosphoserine (S56). T67 bears the Phosphothreonine mark. Y69 is modified (phosphotyrosine). The residue at position 76 (S76) is a Phosphoserine. Phosphothreonine occurs at positions 94 and 97. Q102 carries the deamidated glutamine modification. Omega-N-methylarginine; alternate is present on R106. R106 is subject to Symmetric dimethylarginine; alternate. Position 114 is a phosphoserine (S114). The interval 114-122 (SWGAEGQKP) is induces experimental autoimmune encephalomyelitis (EAE) 2. K121 carries the N6-acetyllysine modification. R129 carries the citrulline modification. Positions 136–167 (GFKGAHDAQGTLSKIFKLGGRDSRSGSPMARR) are disordered. Q144 is modified (deamidated glutamine). R156 carries the citrulline modification. At S158 the chain carries Phosphoserine. The residue at position 162 (S162) is a Phosphoserine; by UHMK1. R167 carries the citrulline modification.

It belongs to the myelin basic protein family. Homodimer. In terms of processing, at least 5 charge isomers; C1 (the most cationic, least modified, and most abundant form), C2, C3, C4 and C5 (the least cationic form); are produced as a result of optional post-translational modifications such as phosphorylation of serine or threonine residues, deamidation of glutamine or asparagine residues, citrullination and methylation of arginine residues. C1 and C2 are unphosphorylated, C3 and C4 are monophosphorylated and C5 is phosphorylated at two positions. Phosphorylated by TAOK2, VRK2, MAPK11, MAPK12, MAPK14 and MINK1. Post-translationally, proteolytically cleaved in B cell lysosomes by cathepsin CTSG which degrades the major immunogenic MBP epitope and prevents the activation of MBP-specific autoreactive T cells. As to expression, found in both the central and the peripheral nervous system.

Its subcellular location is the myelin membrane. Its function is as follows. Is, with PLP, the most abundant protein component of the myelin membrane in the CNS. Has a role in both the formation and stabilization of this compact multilayer arrangement of bilayers. Each splice variant and charge isomer may have a specialized function in the assembly of an optimized, biochemically functional myelin membrane. The protein is Myelin basic protein (MBP) of Cavia porcellus (Guinea pig).